Here is a 152-residue protein sequence, read N- to C-terminus: Proline-rich acidic protein 1 (152 aa).

The first 20 residues, 1-20, serve as a signal peptide directing secretion; it reads MKRFLLATCLVAVLLWEAGA.

Interacts with MTTP. Interacts with MAD1L1. As to expression, highly expressed in the small intestine where it shows a proximal-distal graded expression.

Its subcellular location is the secreted. It is found in the endoplasmic reticulum. Lipid-binding protein which promotes lipid absorption by facilitating MTTP-mediated lipid transfer (mainly triglycerides and phospholipids) and MTTP-mediated apoB lipoprotein assembly and secretion. Protects the gastrointestinal epithelium from irradiation-induced apoptosis. May play an important role in maintaining normal growth homeostasis in epithelial cells. Involved in p53/TP53-dependent cell survival after DNA damage. This chain is Proline-rich acidic protein 1 (Prap1), found in Rattus norvegicus (Rat).